We begin with the raw amino-acid sequence, 297 residues long: E3 ubiquitin-protein ligase RNF212B (297 aa).

The RING-type zinc finger occupies 6–40 (CNQCFRKDGAHFFVTSCGHIFCKKCMTLEKCAVCG). Residues 87–136 (LLIAFYKDRITKLEAAVKEAQEMAASQNKELSALRKENGELKKILDILKG) are a coiled coil. Disordered regions lie at residues 152–179 (VGIT…RSSS) and 198–269 (RGLH…ESLP). The segment covering 163–179 (PRPSSHHSSQVVSRSSS) has biased composition (low complexity). Residues 206 to 234 (PGDSYTETPSPASTHSLSYRPSSASSGQG) show a composition bias toward polar residues.

As to quaternary structure, homodimer. Autoubiquitinated.

The protein localises to the chromosome. It catalyses the reaction S-ubiquitinyl-[E2 ubiquitin-conjugating enzyme]-L-cysteine + [acceptor protein]-L-lysine = [E2 ubiquitin-conjugating enzyme]-L-cysteine + N(6)-ubiquitinyl-[acceptor protein]-L-lysine.. Its pathway is protein modification; protein ubiquitination. Functionally, ubiquitin E3 ligase that acts as a crucial factor for crossing-over (CO) formation during meiosis. Essential for normal prophase I progression and for ensuring appropriate CO designation in meiosis. Recruits key components of the cross-over machinery either directly ou indirectly, leading to the activation of the MutL-gamma complex. The function of RNF212B in CO designation is dependent on its catalytic activity. The sequence is that of E3 ubiquitin-protein ligase RNF212B (Rnf212b) from Mus musculus (Mouse).